A 136-amino-acid chain; its full sequence is MSTCNYSPKEKPVDVNNVSEKSAAVNNVPEKPAIVNNTSEKAVDVNNVSEKPVDVNNVSEKSAAVNNALEKPAGANNIPEKSAGRMTSSEWIAEYWKGIKRGNDVPCCCPRKMTSADEKFPVFCKGYLMRSMHKDD.

The segment at 66 to 86 (NNALEKPAGANNIPEKSAGRM) is disordered.

It belongs to the asfivirus DP96R family.

Functionally, inhibits cGAS-STING-mediated type I IFN expression and NF-kB activation by inhibiting TBK1 and IKBKB/IKKB. Inhibits host TBK1 phosphorylation. This is TBK1 inhibitor DP96R from Ornithodoros (relapsing fever ticks).